Consider the following 169-residue polypeptide: Queuosine precursor transporter QueT (169 aa).

5 helical membrane passes run Ile9–Ser29, Leu44–Ile64, Val73–Phe93, Phe110–Phe130, and Leu137–Ile157.

The protein belongs to the vitamin uptake transporter (VUT/ECF) (TC 2.A.88) family. In E.coli forms a stable energy-coupling factor (ECF) transporter complex composed of 2 membrane-embedded substrate-binding protein (S component), 2 ATP-binding proteins (A and A' components) and 2 transmembrane proteins (T component), probably with a stoichiometry of 2:1:1:2. May be able to interact with more than 1 S component at a time.

Its subcellular location is the cell membrane. Functionally, probably a queuosine precursor-binding protein that interacts with the energy-coupling factor (ECF) ABC-transporter complex. Unlike classic ABC transporters this ECF transporter provides the energy necessary to transport a number of different substrates. The substrates themselves are bound by transmembrane, not extracytoplasmic soluble proteins. The chain is Queuosine precursor transporter QueT (queT) from Lactococcus lactis subsp. cremoris (strain MG1363).